The chain runs to 226 residues: Lysoplasmalogenase TMEM86B (226 aa).

Over 1-23 (MDAGKAGQTLKTHCSAQRPDVCR) the chain is Cytoplasmic. A helical membrane pass occupies residues 24 to 40 (WLSPFILSCCVYFCLWI). Over 41 to 46 (PEDQLS) the chain is Extracellular. A helical membrane pass occupies residues 47–67 (WFAALVKCLPVLCLAGFLWVM). The Cytoplasmic portion of the chain corresponds to 68–75 (SPSGGYTQ). Residues 76–93 (LLQGALVCSAVGDACLIW) traverse the membrane as a helical segment. Residues 94–100 (PAAFVPG) lie on the Extracellular side of the membrane. Residues 101–117 (MAAFATAHLLYVWAFGF) form a helical membrane-spanning segment. The Cytoplasmic segment spans residues 118-123 (SPLQPG). A helical transmembrane segment spans residues 124–140 (LLLLIILAPGPYLSLVL). Topologically, residues 141 to 146 (QHLEPD) are extracellular. Residues 147–163 (MVLPVAAYGLILMAMLW) form a helical membrane-spanning segment. Residues 164–171 (RGLAQGGS) lie on the Cytoplasmic side of the membrane. The chain crosses the membrane as a helical span at residues 172–188 (AGWGALLFTLSDGVLAW). Residues 189 to 199 (DTFAQPLPHAH) are Extracellular-facing. A helical membrane pass occupies residues 200-218 (LVIMTTYYAAQLLITLSAL). Over 219 to 226 (RSPVPKTD) the chain is Cytoplasmic.

The protein belongs to the TMEM86 family. In terms of assembly, homodimer.

It localises to the endoplasmic reticulum membrane. The protein resides in the cytoplasm. It catalyses the reaction a 1-O-(1Z-alkenyl)-sn-glycero-3-phosphocholine + H2O = a 2,3-saturated aldehyde + sn-glycerol 3-phosphocholine. The catalysed reaction is a 1-O-(1Z-alkenyl)-sn-glycero-3-phosphoethanolamine + H2O = a 2,3-saturated aldehyde + sn-glycero-3-phosphoethanolamine. Competitively inhibited by lysophosphatidic acid. In terms of biological role, catalyzes the hydrolysis of the vinyl ether bond of choline or ethanolamine lysoplasmalogens, forming fatty aldehyde and glycerophosphocholine or glycerophosphoethanolamine, respectively and is specific for the sn-2-deacylated (lyso) form of plasmalogen. This is Lysoplasmalogenase TMEM86B (TMEM86B) from Homo sapiens (Human).